The following is a 696-amino-acid chain: HIPL2 protein (696 aa).

A signal peptide spans 1–24; sequence MAKTNQAITICSLLLLLLLSETTS. Residues Asn-38, Asn-69, Asn-74, Asn-108, Asn-124, Asn-148, Asn-175, Asn-339, Asn-431, Asn-513, Asn-519, Asn-528, Asn-581, and Asn-651 are each glycosylated (N-linked (GlcNAc...) asparagine). Residue Ser-672 is the site of GPI-anchor amidated serine attachment. The propeptide at 673 to 696 is removed in mature form; that stretch reads SARKLCFSVFLLLSLLMMFLTLLD.

Belongs to the PQQ oxidoreductase GdhB family. The cofactor is pyrroloquinoline quinone.

It localises to the cell membrane. The polypeptide is HIPL2 protein (HIPL2) (Arabidopsis thaliana (Mouse-ear cress)).